We begin with the raw amino-acid sequence, 134 residues long: Large ribosomal subunit protein uL16c (134 aa).

Over residues 1-17 the composition is skewed to basic residues; the sequence is MLSPKRTRFRKQHRGRM. The disordered stretch occupies residues 1–22; that stretch reads MLSPKRTRFRKQHRGRMKGISS.

Belongs to the universal ribosomal protein uL16 family. Part of the 50S ribosomal subunit.

It localises to the plastid. The protein resides in the chloroplast. The polypeptide is Large ribosomal subunit protein uL16c (Solanum tuberosum (Potato)).